Reading from the N-terminus, the 452-residue chain is Transcription factor ETV6 (452 aa).

K11 carries the post-translational modification N6-acetyllysine; alternate. A Glycyl lysine isopeptide (Lys-Gly) (interchain with G-Cter in SUMO2); alternate cross-link involves residue K11. T18 carries the phosphothreonine modification. S22 bears the Phosphoserine mark. Residues 40–124 (ALRMEEDSIR…ELLQHILKQR (85 aa)) enclose the PNT domain. Residues 154–262 (EDNGVQRTSR…PRPSSPRQEG (109 aa)) form a disordered region. The segment covering 158–174 (VQRTSRPSAENVHQNPP) has biased composition (polar residues). Phosphoserine occurs at positions 213, 238, and 257. K288 participates in a covalent cross-link: Glycyl lysine isopeptide (Lys-Gly) (interchain with G-Cter in SUMO2). The residue at position 302 (K302) is an N6-acetyllysine; alternate. Residue K302 forms a Glycyl lysine isopeptide (Lys-Gly) (interchain with G-Cter in SUMO2); alternate linkage. S323 is subject to Phosphoserine. The ETS DNA-binding region spans 339-420 (RLLWDYVYQL…PGQRLLFRFM (82 aa)). Glycyl lysine isopeptide (Lys-Gly) (interchain with G-Cter in SUMO2) cross-links involve residues K403 and K421.

It belongs to the ETS family. In terms of assembly, can form homodimers or heterodimers with TEL2 or FLI1. Interacts with L3MBTL1 and HDAC9.

The protein resides in the nucleus. Its function is as follows. Transcriptional repressor; binds to the DNA sequence 5'-CCGGAAGT-3'. Plays a role in hematopoiesis and malignant transformation. This is Transcription factor ETV6 (ETV6) from Bos taurus (Bovine).